The chain runs to 307 residues: Putative S-adenosyl-L-methionine-dependent methyltransferase Mflv_5025 (307 aa).

Residues aspartate 130 and 159–160 (DL) contribute to the S-adenosyl-L-methionine site.

It belongs to the UPF0677 family.

In terms of biological role, exhibits S-adenosyl-L-methionine-dependent methyltransferase activity. The protein is Putative S-adenosyl-L-methionine-dependent methyltransferase Mflv_5025 of Mycolicibacterium gilvum (strain PYR-GCK) (Mycobacterium gilvum (strain PYR-GCK)).